The primary structure comprises 96 residues: Putative defensin-like protein 263 (96 aa).

Positions 1 to 26 are cleaved as a signal peptide; it reads MEKTSLKLVFLFSLTVIALCLSLSAA. 4 cysteine pairs are disulfide-bonded: Cys48/Cys96, Cys67/Cys86, Cys73/Cys91, and Cys77/Cys93.

Belongs to the DEFL family.

It localises to the secreted. This is Putative defensin-like protein 263 from Arabidopsis thaliana (Mouse-ear cress).